The chain runs to 739 residues: Phosphoribosylformylglycinamidine synthase subunit PurL (739 aa).

The active site involves H54. Residues Y57 and K96 each coordinate ATP. Residue E98 coordinates Mg(2+). Residues 99–102 (SHNH) and R121 contribute to the substrate site. H100 acts as the Proton acceptor in catalysis. Position 122 (D122) interacts with Mg(2+). Q245 lines the substrate pocket. Position 273 (D273) interacts with Mg(2+). 317-319 (ESQ) contributes to the substrate binding site. ATP is bound by residues D500 and G537. N538 lines the Mg(2+) pocket. S540 provides a ligand contact to substrate.

Belongs to the FGAMS family. Monomer. Part of the FGAM synthase complex composed of 1 PurL, 1 PurQ and 2 PurS subunits.

Its subcellular location is the cytoplasm. It catalyses the reaction N(2)-formyl-N(1)-(5-phospho-beta-D-ribosyl)glycinamide + L-glutamine + ATP + H2O = 2-formamido-N(1)-(5-O-phospho-beta-D-ribosyl)acetamidine + L-glutamate + ADP + phosphate + H(+). It participates in purine metabolism; IMP biosynthesis via de novo pathway; 5-amino-1-(5-phospho-D-ribosyl)imidazole from N(2)-formyl-N(1)-(5-phospho-D-ribosyl)glycinamide: step 1/2. Its function is as follows. Part of the phosphoribosylformylglycinamidine synthase complex involved in the purines biosynthetic pathway. Catalyzes the ATP-dependent conversion of formylglycinamide ribonucleotide (FGAR) and glutamine to yield formylglycinamidine ribonucleotide (FGAM) and glutamate. The FGAM synthase complex is composed of three subunits. PurQ produces an ammonia molecule by converting glutamine to glutamate. PurL transfers the ammonia molecule to FGAR to form FGAM in an ATP-dependent manner. PurS interacts with PurQ and PurL and is thought to assist in the transfer of the ammonia molecule from PurQ to PurL. This Exiguobacterium sp. (strain ATCC BAA-1283 / AT1b) protein is Phosphoribosylformylglycinamidine synthase subunit PurL.